The sequence spans 81 residues: Photosystem I iron-sulfur center (81 aa).

2 consecutive 4Fe-4S ferredoxin-type domains span residues 2–31 (AHSV…MVPW) and 39–68 (IASA…VRVY). The [4Fe-4S] cluster site is built by cysteine 11, cysteine 14, cysteine 17, cysteine 21, cysteine 48, cysteine 51, cysteine 54, and cysteine 58.

The eukaryotic PSI reaction center is composed of at least 11 subunits. It depends on [4Fe-4S] cluster as a cofactor.

The protein resides in the plastid. Its subcellular location is the chloroplast thylakoid membrane. It catalyses the reaction reduced [plastocyanin] + hnu + oxidized [2Fe-2S]-[ferredoxin] = oxidized [plastocyanin] + reduced [2Fe-2S]-[ferredoxin]. In terms of biological role, apoprotein for the two 4Fe-4S centers FA and FB of photosystem I (PSI); essential for photochemical activity. FB is the terminal electron acceptor of PSI, donating electrons to ferredoxin. The C-terminus interacts with PsaA/B/D and helps assemble the protein into the PSI complex. Required for binding of PsaD and PsaE to PSI. PSI is a plastocyanin/cytochrome c6-ferredoxin oxidoreductase, converting photonic excitation into a charge separation, which transfers an electron from the donor P700 chlorophyll pair to the spectroscopically characterized acceptors A0, A1, FX, FA and FB in turn. The protein is Photosystem I iron-sulfur center of Pyropia yezoensis (Susabi-nori).